Here is a 188-residue protein sequence, read N- to C-terminus: dCTP deaminase (188 aa).

Residue 109-114 (KSTYAR) coordinates dCTP. Catalysis depends on Glu-135, which acts as the Proton donor/acceptor. Residues Gln-154, Tyr-168, and Gln-178 each contribute to the dCTP site.

This sequence belongs to the dCTP deaminase family. In terms of assembly, homotrimer.

It catalyses the reaction dCTP + H2O + H(+) = dUTP + NH4(+). Its pathway is pyrimidine metabolism; dUMP biosynthesis; dUMP from dCTP (dUTP route): step 1/2. Functionally, catalyzes the deamination of dCTP to dUTP. This is dCTP deaminase from Helicobacter pylori (strain G27).